The following is a 101-amino-acid chain: Small ribosomal subunit protein uS14 (101 aa).

Belongs to the universal ribosomal protein uS14 family. In terms of assembly, part of the 30S ribosomal subunit. Contacts proteins S3 and S10.

Binds 16S rRNA, required for the assembly of 30S particles and may also be responsible for determining the conformation of the 16S rRNA at the A site. This is Small ribosomal subunit protein uS14 from Bordetella petrii (strain ATCC BAA-461 / DSM 12804 / CCUG 43448).